Reading from the N-terminus, the 441-residue chain is Histidinol dehydrogenase (441 aa).

The NAD(+) site is built by Y136, Q197, and N220. Substrate is bound by residues S243, Q265, and H268. Zn(2+)-binding residues include Q265 and H268. Residues E333 and H334 each act as proton acceptor in the active site. The substrate site is built by H334, D367, E421, and H426. Zn(2+) is bound at residue D367. H426 is a Zn(2+) binding site.

The protein belongs to the histidinol dehydrogenase family. It depends on Zn(2+) as a cofactor.

The enzyme catalyses L-histidinol + 2 NAD(+) + H2O = L-histidine + 2 NADH + 3 H(+). Its pathway is amino-acid biosynthesis; L-histidine biosynthesis; L-histidine from 5-phospho-alpha-D-ribose 1-diphosphate: step 9/9. Functionally, catalyzes the sequential NAD-dependent oxidations of L-histidinol to L-histidinaldehyde and then to L-histidine. The chain is Histidinol dehydrogenase from Pseudomonas fluorescens (strain Pf0-1).